The chain runs to 431 residues: Serine--tRNA ligase (431 aa).

Residue 237-239 (TAE) coordinates L-serine. Residue 268–270 (RSE) coordinates ATP. An L-serine-binding site is contributed by glutamate 291. An ATP-binding site is contributed by 355-358 (EISS). Residue serine 390 participates in L-serine binding.

The protein belongs to the class-II aminoacyl-tRNA synthetase family. Type-1 seryl-tRNA synthetase subfamily. In terms of assembly, homodimer. The tRNA molecule binds across the dimer.

The protein localises to the cytoplasm. It catalyses the reaction tRNA(Ser) + L-serine + ATP = L-seryl-tRNA(Ser) + AMP + diphosphate + H(+). The enzyme catalyses tRNA(Sec) + L-serine + ATP = L-seryl-tRNA(Sec) + AMP + diphosphate + H(+). The protein operates within aminoacyl-tRNA biosynthesis; selenocysteinyl-tRNA(Sec) biosynthesis; L-seryl-tRNA(Sec) from L-serine and tRNA(Sec): step 1/1. In terms of biological role, catalyzes the attachment of serine to tRNA(Ser). Is also able to aminoacylate tRNA(Sec) with serine, to form the misacylated tRNA L-seryl-tRNA(Sec), which will be further converted into selenocysteinyl-tRNA(Sec). This is Serine--tRNA ligase from Neisseria gonorrhoeae (strain ATCC 700825 / FA 1090).